We begin with the raw amino-acid sequence, 360 residues long: Phenylalanine--tRNA ligase alpha subunit (360 aa).

A Mg(2+)-binding site is contributed by Glu260.

This sequence belongs to the class-II aminoacyl-tRNA synthetase family. Phe-tRNA synthetase alpha subunit type 1 subfamily. As to quaternary structure, tetramer of two alpha and two beta subunits. Mg(2+) serves as cofactor.

It is found in the cytoplasm. The catalysed reaction is tRNA(Phe) + L-phenylalanine + ATP = L-phenylalanyl-tRNA(Phe) + AMP + diphosphate + H(+). This chain is Phenylalanine--tRNA ligase alpha subunit, found in Paracoccus denitrificans (strain Pd 1222).